The chain runs to 320 residues: o-succinylbenzoate synthase (320 aa).

Catalysis depends on K133, which acts as the Proton donor. Mg(2+) is bound by residues D161, E190, and D213. The Proton acceptor role is filled by K235.

The protein belongs to the mandelate racemase/muconate lactonizing enzyme family. MenC type 1 subfamily. It depends on a divalent metal cation as a cofactor.

It carries out the reaction (1R,6R)-6-hydroxy-2-succinyl-cyclohexa-2,4-diene-1-carboxylate = 2-succinylbenzoate + H2O. Its pathway is quinol/quinone metabolism; 1,4-dihydroxy-2-naphthoate biosynthesis; 1,4-dihydroxy-2-naphthoate from chorismate: step 4/7. It participates in quinol/quinone metabolism; menaquinone biosynthesis. Converts 2-succinyl-6-hydroxy-2,4-cyclohexadiene-1-carboxylate (SHCHC) to 2-succinylbenzoate (OSB). The chain is o-succinylbenzoate synthase from Salmonella paratyphi B (strain ATCC BAA-1250 / SPB7).